The primary structure comprises 620 residues: Ferric/cupric reductase transmembrane component 7 (620 aa).

Residues 1–45 (MIEERDLVLSNGIHCIADIHSELYARLKKESQAATPWVYQKQYGK) are Extracellular-facing. The chain crosses the membrane as a helical span at residues 46–66 (FVTYFVAVIIFLSLIKKLAFM). At 67 to 107 (YYDSSEEFLPEKKNSPTTPSVFLARIMTKLVAFNRYICYRK) the chain is on the cytoplasmic side. A helical membrane pass occupies residues 108-128 (FPTLIFSYLGIPTSVGTFLVV). The Extracellular segment spans residues 129–167 (MATTLYTLLYCFVPHPFYRPCAGFGSPPLSVRAGIMAIS). In terms of domain architecture, Ferric oxidoreductase spans 161–320 (AGIMAISLVP…LAVKGYLRPG (160 aa)). Residues 168 to 188 (LVPFVFSLSGKINVIGWLVGL) traverse the membrane as a helical segment. The Cytoplasmic segment spans residues 189–194 (SYEKIN). Residues 195–215 (IYHQWASILCLFFSWVHVIPF) form a helical membrane-spanning segment. 2 residues coordinate heme: His197 and His211. Residues 216-237 (LRQARHEGGYERMHQRWKASDM) lie on the Extracellular side of the membrane. Residues 238 to 258 (WRSGVPPILFLNLLWLSSLPI) form a helical membrane-spanning segment. The Cytoplasmic portion of the chain corresponds to 259 to 265 (ARRHFYE). A helical transmembrane segment spans residues 266 to 286 (IFLQLHWILAVGFYISLFYHV). Heme contacts are provided by His271 and His285. Residues 287–292 (YPELNS) are Extracellular-facing. The helical transmembrane segment at 293–313 (HMYLVATIVVWFAQLFYRLAV) threads the bilayer. The Cytoplasmic segment spans residues 314-620 (KGYLRPGRSF…CYLHSESFGY (307 aa)). Residues 321–419 (RSFMASTIAN…DGPYGGIERD (99 aa)) enclose the FAD-binding FR-type domain. 369 to 375 (HPFSIFP) provides a ligand contact to FAD. NADP(+) is bound at residue 411-414 (GPYG). Residues 519–543 (SDQSDLAKREKDTEFGQDDTESNST) form a disordered region. Residues 523–532 (DLAKREKDTE) are compositionally biased toward basic and acidic residues. Position 578–579 (578–579 (CF)) interacts with NADP(+).

It belongs to the ferric reductase (FRE) family. It depends on FAD as a cofactor.

It is found in the cell membrane. The catalysed reaction is 2 a Fe(II)-siderophore + NADP(+) + H(+) = 2 a Fe(III)-siderophore + NADPH. Cell surface metalloreductase. May be involved in copper homeostasis. The chain is Ferric/cupric reductase transmembrane component 7 (FRE7) from Saccharomyces cerevisiae (strain ATCC 204508 / S288c) (Baker's yeast).